We begin with the raw amino-acid sequence, 208 residues long: EF-hand protein 5 variant 2 (208 aa).

Positions 1-35 (MQARGTVKVQGDANVDGKMSTGQHPHHQHLNSTQA) are disordered. EF-hand domains are found at residues 64–98 (MAEG…HLTE), 99–134 (EEFH…EVDD), 135–170 (TMAD…LAER), and 171–206 (STPE…SRVN). The Ca(2+) site is built by E118, D123, D148, T152, and Y154.

The sequence is that of EF-hand protein 5 variant 2 from Trypanosoma cruzi.